Here is a 153-residue protein sequence, read N- to C-terminus: 3-hydroxyacyl-[acyl-carrier-protein] dehydratase FabZ (153 aa).

The active site involves His54.

The protein belongs to the thioester dehydratase family. FabZ subfamily.

It localises to the cytoplasm. The enzyme catalyses a (3R)-hydroxyacyl-[ACP] = a (2E)-enoyl-[ACP] + H2O. Its function is as follows. Involved in unsaturated fatty acids biosynthesis. Catalyzes the dehydration of short chain beta-hydroxyacyl-ACPs and long chain saturated and unsaturated beta-hydroxyacyl-ACPs. The chain is 3-hydroxyacyl-[acyl-carrier-protein] dehydratase FabZ from Shewanella pealeana (strain ATCC 700345 / ANG-SQ1).